A 193-amino-acid polypeptide reads, in one-letter code: Ion-translocating oxidoreductase complex subunit A (193 aa).

6 helical membrane-spanning segments follow: residues 5-25, 39-59, 65-85, 102-122, 134-154, and 171-191; these read ILLI…FLGL, IGMG…AYLV, IPLE…AVIV, LLGI…VALL, VLYG…FAAL, and SIAL…TGLV.

It belongs to the NqrDE/RnfAE family. The complex is composed of six subunits: RnfA, RnfB, RnfC, RnfD, RnfE and RnfG.

It is found in the cell inner membrane. Functionally, part of a membrane-bound complex that couples electron transfer with translocation of ions across the membrane. The polypeptide is Ion-translocating oxidoreductase complex subunit A (Actinobacillus pleuropneumoniae serotype 5b (strain L20)).